The sequence spans 154 residues: UPF0260 protein NTHI1811 (154 aa).

Belongs to the UPF0260 family.

The protein is UPF0260 protein NTHI1811 of Haemophilus influenzae (strain 86-028NP).